Here is a 119-residue protein sequence, read N- to C-terminus: Ig heavy chain V region T601 (119 aa).

The Ig-like domain occupies 1 to 112 (EVKLLESGGG…GYFDVWGAGT (112 aa)).

The chain is Ig heavy chain V region T601 from Mus musculus (Mouse).